We begin with the raw amino-acid sequence, 263 residues long: Phosphatidylglycerol--prolipoprotein diacylglyceryl transferase (263 aa).

Helical transmembrane passes span 15 to 35, 52 to 72, 83 to 103, and 112 to 132; these read ISIHWYAICIVSGLLLAVYLA, FILLAFPIAIVGARLYYVIFQ, IFAIWNGGIAIYGGLIAGAAV, and AIAVLDFLDIAAPGVMIAQSI. R134 is an a 1,2-diacyl-sn-glycero-3-phospho-(1'-sn-glycerol) binding site. Transmembrane regions (helical) follow at residues 170-190, 200-220, and 230-250; these read VPTFLYESLWNLVGFSIILGL, GDVTSFYLIWYGLGRFVIEGM, and LRVSQWVSISIIILGAVLLYF.

It belongs to the Lgt family.

It is found in the cell membrane. The enzyme catalyses L-cysteinyl-[prolipoprotein] + a 1,2-diacyl-sn-glycero-3-phospho-(1'-sn-glycerol) = an S-1,2-diacyl-sn-glyceryl-L-cysteinyl-[prolipoprotein] + sn-glycerol 1-phosphate + H(+). The protein operates within protein modification; lipoprotein biosynthesis (diacylglyceryl transfer). Functionally, catalyzes the transfer of the diacylglyceryl group from phosphatidylglycerol to the sulfhydryl group of the N-terminal cysteine of a prolipoprotein, the first step in the formation of mature lipoproteins. This is Phosphatidylglycerol--prolipoprotein diacylglyceryl transferase from Streptococcus thermophilus (strain ATCC BAA-250 / LMG 18311).